Reading from the N-terminus, the 342-residue chain is Dysbindin (342 aa).

Position 11 is a phosphoserine (S11). A coiled-coil region spans residues L83–K180. The Nuclear export signal signature appears at L243 to L256. Residues N263–S342 form a disordered region. The span at P286 to P305 shows a compositional bias: low complexity. S316, S321, and S340 each carry phosphoserine.

The protein belongs to the dysbindin family. Interacts (via its coiled coil domain) with KXD1. Interacts with CMYA5, PI4K2 and RNF151. Component of the biogenesis of lysosome-related organelles complex 1 (BLOC-1) composed of at least BLOC1S1, BLOC1S2, BLOC1S3, BLOC1S4, BLOC1S5, BLOC1S6, DTNBP1/BLOC1S7 and SNAPIN/BLOC1S8. Interacts directly in the complex with BLOC1S5, BLOC1S6 and SNAPIN/BLOC1S8. The BLOC-1 complex associates with the AP-3 protein complex and membrane protein cargos. This BLOC-1 complex also associates with the BLOC-2 complex in endosomes. Binds to DTNA and DTNB but may not be a physiological binding partner. Interacts with the DNA-dependent protein kinase complex DNA-PK; the interaction phosphorylates DTNBP1 in vitro. Interacts directly in this complex with XRCC5 and XRCC6. Interacts with AP3M1, AP3B2 and TRIM32. Interacts with XPO1; the interaction exports DTNBP1 out of the nucleus. Ubiquitinated by TRIM32. Ubiquitination leads to DTNBP1 degradation.

It localises to the cytoplasm. It is found in the cytoplasmic vesicle membrane. Its subcellular location is the cytoplasmic vesicle. The protein localises to the secretory vesicle. The protein resides in the synaptic vesicle membrane. It localises to the endosome membrane. It is found in the melanosome membrane. Its subcellular location is the nucleus. The protein localises to the postsynaptic density. The protein resides in the presynaptic cell membrane. It localises to the endoplasmic reticulum. Component of the BLOC-1 complex, a complex that is required for normal biogenesis of lysosome-related organelles (LRO), such as platelet dense granules and melanosomes. In concert with the AP-3 complex, the BLOC-1 complex is required to target membrane protein cargos into vesicles assembled at cell bodies for delivery into neurites and nerve terminals. The BLOC-1 complex, in association with SNARE proteins, is also proposed to be involved in neurite extension. Associates with the BLOC-2 complex to facilitate the transport of TYRP1 independent of AP-3 function. Plays a role in synaptic vesicle trafficking and in neurotransmitter release. Plays a role in the regulation of cell surface exposure of DRD2. May play a role in actin cytoskeleton reorganization and neurite outgrowth. May modulate MAPK8 phosphorylation. Appears to promote neuronal transmission and viability through regulating the expression of SNAP25 and SYN1, modulating PI3-kinase-Akt signaling and influencing glutamatergic release. Regulates the expression of SYN1 through binding to its promoter. Modulates prefrontal cortical activity via the dopamine/D2 pathway. The polypeptide is Dysbindin (DTNBP1) (Bos taurus (Bovine)).